A 345-amino-acid polypeptide reads, in one-letter code: Phosphoribosylformylglycinamidine cyclo-ligase (345 aa).

It belongs to the AIR synthase family.

It localises to the cytoplasm. It catalyses the reaction 2-formamido-N(1)-(5-O-phospho-beta-D-ribosyl)acetamidine + ATP = 5-amino-1-(5-phospho-beta-D-ribosyl)imidazole + ADP + phosphate + H(+). The protein operates within purine metabolism; IMP biosynthesis via de novo pathway; 5-amino-1-(5-phospho-D-ribosyl)imidazole from N(2)-formyl-N(1)-(5-phospho-D-ribosyl)glycinamide: step 2/2. In Pseudoalteromonas atlantica (strain T6c / ATCC BAA-1087), this protein is Phosphoribosylformylglycinamidine cyclo-ligase.